The primary structure comprises 178 residues: Inorganic pyrophosphatase (178 aa).

Residues K31, R45, and Y57 each contribute to the substrate site. Residues D67, D72, and D104 each coordinate Mg(2+). Y141 contributes to the substrate binding site.

The protein belongs to the PPase family. As to quaternary structure, homohexamer. Mg(2+) serves as cofactor.

The protein resides in the cytoplasm. It catalyses the reaction diphosphate + H2O = 2 phosphate + H(+). Catalyzes the hydrolysis of inorganic pyrophosphate (PPi) forming two phosphate ions. This is Inorganic pyrophosphatase from Leptospira interrogans serogroup Icterohaemorrhagiae serovar copenhageni (strain Fiocruz L1-130).